Here is a 199-residue protein sequence, read N- to C-terminus: Small ribosomal subunit protein uS14m (199 aa).

The interval 28-67 (LSTPAPEPAKPSSEETTESTEPATSVEDAGEPMKEKRITQ) is disordered.

This sequence belongs to the universal ribosomal protein uS14 family. Component of the mitochondrial ribosome small subunit (28S) which comprises a 12S rRNA and about 30 distinct proteins. Interacts with LIAT1.

It localises to the mitochondrion. The polypeptide is Small ribosomal subunit protein uS14m (mrps-14) (Caenorhabditis elegans).